The sequence spans 461 residues: Photosystem II CP43 reaction center protein (461 aa).

Residues 1–2 constitute a propeptide that is removed on maturation; that stretch reads ME. At threonine 3 the chain carries N-acetylthreonine. Threonine 3 carries the post-translational modification Phosphothreonine. The next 5 helical transmembrane spans lie at 57-81, 122-143, 166-188, 243-263, and 279-300; these read LFEV…PHLA, LIGP…KDKS, KSVY…RKIT, KPFA…LSYS, and WFNN…ASQA. [CaMn4O5] cluster is bound at residue glutamate 355. A helical membrane pass occupies residues 435–459; it reads RARAAAAGFEKGIDRDTEPVLSMTP.

This sequence belongs to the PsbB/PsbC family. PsbC subfamily. As to quaternary structure, PSII is composed of 1 copy each of membrane proteins PsbA, PsbB, PsbC, PsbD, PsbE, PsbF, PsbH, PsbI, PsbJ, PsbK, PsbL, PsbM, PsbT, PsbX, PsbY, PsbZ, Psb30/Ycf12, at least 3 peripheral proteins of the oxygen-evolving complex and a large number of cofactors. It forms dimeric complexes. It depends on Binds multiple chlorophylls and provides some of the ligands for the Ca-4Mn-5O cluster of the oxygen-evolving complex. It may also provide a ligand for a Cl- that is required for oxygen evolution. PSII binds additional chlorophylls, carotenoids and specific lipids. as a cofactor.

It is found in the plastid. Its subcellular location is the chloroplast thylakoid membrane. In terms of biological role, one of the components of the core complex of photosystem II (PSII). It binds chlorophyll and helps catalyze the primary light-induced photochemical processes of PSII. PSII is a light-driven water:plastoquinone oxidoreductase, using light energy to abstract electrons from H(2)O, generating O(2) and a proton gradient subsequently used for ATP formation. The polypeptide is Photosystem II CP43 reaction center protein (Psilotum nudum (Whisk fern)).